The primary structure comprises 125 residues: NADPH-dependent 7-cyano-7-deazaguanine reductase (125 aa).

C41 functions as the Thioimide intermediate in the catalytic mechanism. D48 serves as the catalytic Proton donor. Residues 63 to 65 (VEL) and 82 to 83 (HE) contribute to the substrate site.

Belongs to the GTP cyclohydrolase I family. QueF type 1 subfamily.

It is found in the cytoplasm. The enzyme catalyses 7-aminomethyl-7-carbaguanine + 2 NADP(+) = 7-cyano-7-deazaguanine + 2 NADPH + 3 H(+). Its pathway is tRNA modification; tRNA-queuosine biosynthesis. Its function is as follows. Catalyzes the NADPH-dependent reduction of 7-cyano-7-deazaguanine (preQ0) to 7-aminomethyl-7-deazaguanine (preQ1). The sequence is that of NADPH-dependent 7-cyano-7-deazaguanine reductase from Sulfurimonas denitrificans (strain ATCC 33889 / DSM 1251) (Thiomicrospira denitrificans (strain ATCC 33889 / DSM 1251)).